The primary structure comprises 98 residues: ESAT-6-like protein EsxJ (98 aa).

Belongs to the WXG100 family. CFP-10 subfamily.

The protein localises to the secreted. This chain is ESAT-6-like protein EsxJ, found in Mycobacterium bovis (strain ATCC BAA-935 / AF2122/97).